Reading from the N-terminus, the 177-residue chain is Large ribosomal subunit protein uL6 (177 aa).

The span at 152–171 (RPPEPYKGKGVRYDDEEVRR) shows a compositional bias: basic and acidic residues. Positions 152–177 (RPPEPYKGKGVRYDDEEVRRKEAKKK) are disordered.

The protein belongs to the universal ribosomal protein uL6 family. As to quaternary structure, part of the 50S ribosomal subunit.

Functionally, this protein binds to the 23S rRNA, and is important in its secondary structure. It is located near the subunit interface in the base of the L7/L12 stalk, and near the tRNA binding site of the peptidyltransferase center. The sequence is that of Large ribosomal subunit protein uL6 from Shewanella sp. (strain ANA-3).